The following is a 250-amino-acid chain: Proteasome subunit alpha (250 aa).

It belongs to the peptidase T1A family. As to quaternary structure, the 20S proteasome core is composed of 14 alpha and 14 beta subunits that assemble into four stacked heptameric rings, resulting in a barrel-shaped structure. The two inner rings, each composed of seven catalytic beta subunits, are sandwiched by two outer rings, each composed of seven alpha subunits. The catalytic chamber with the active sites is on the inside of the barrel. Has a gated structure, the ends of the cylinder being occluded by the N-termini of the alpha-subunits. Is capped at one or both ends by the proteasome regulatory ATPase, PAN.

The protein resides in the cytoplasm. The formation of the proteasomal ATPase PAN-20S proteasome complex, via the docking of the C-termini of PAN into the intersubunit pockets in the alpha-rings, triggers opening of the gate for substrate entry. Interconversion between the open-gate and close-gate conformations leads to a dynamic regulation of the 20S proteasome proteolysis activity. In terms of biological role, component of the proteasome core, a large protease complex with broad specificity involved in protein degradation. This chain is Proteasome subunit alpha, found in Methanobrevibacter smithii (strain ATCC 35061 / DSM 861 / OCM 144 / PS).